The chain runs to 29 residues: Kappa-theraphotoxin-Ps1a (29 aa).

3 disulfides stabilise this stretch: cysteine 2/cysteine 16, cysteine 9/cysteine 21, and cysteine 15/cysteine 25. At isoleucine 29 the chain carries Isoleucine amide.

This sequence belongs to the neurotoxin 30 (phrixotoxin) family. In terms of tissue distribution, expressed by the venom gland.

Its subcellular location is the secreted. Its function is as follows. Potent and specific blocker of Kv4.2/KCND2 (IC(50)=5 nM) and Kv4.3/KCND3 (IC(50)=28 nM) potassium channels. Acts by altering the gating properties of these channels. Also shows moderate inhibition on human voltage-gated sodium channel Nav1.7/SCN9A activation (IC(50)=423 nM). The chain is Kappa-theraphotoxin-Ps1a from Paraphysa scrofa (Chilean copper tarantula).